The primary structure comprises 181 residues: Neuroblastoma suppressor of tumorigenicity 1 (181 aa).

Residues 1–16 (MMLRVLVGAVLPAMLL) form the signal peptide. 5 disulfides stabilise this stretch: cysteine 35/cysteine 85, cysteine 49/cysteine 99, cysteine 59/cysteine 118, cysteine 63/cysteine 120, and cysteine 82/cysteine 123. The CTCK domain occupies 35-124 (CEAKNITQIV…ILHCSCQACG (90 aa)). A disordered region spans residues 132 to 181 (LSVYVQGEDGPGSQPGTHPHPHPHPHPGGQTPEPEDPPGAPHTEEEGAED).

The protein belongs to the DAN family. Homodimer. In terms of tissue distribution, most abundant in normal lung and meningioma.

It is found in the secreted. Possible candidate as a tumor suppressor gene of neuroblastoma. May play an important role in preventing cells from entering the final stage (G1/S) of the transformation process. This chain is Neuroblastoma suppressor of tumorigenicity 1 (NBL1), found in Homo sapiens (Human).